A 151-amino-acid chain; its full sequence is Protein SprT-like (151 aa).

Positions 6–147 constitute a SprT-like domain; the sequence is LQRMVENLSE…GHCNGKLRMK (142 aa). Residue His67 coordinates Zn(2+). Glu68 is an active-site residue. His71 provides a ligand contact to Zn(2+).

The protein belongs to the SprT family. The cofactor is Zn(2+).

The protein localises to the cytoplasm. The chain is Protein SprT-like from Staphylococcus aureus (strain Mu3 / ATCC 700698).